The following is a 428-amino-acid chain: Enolase (428 aa).

Gln-167 is a (2R)-2-phosphoglycerate binding site. Residue Glu-209 is the Proton donor of the active site. Mg(2+)-binding residues include Asp-246, Glu-289, and Asp-316. (2R)-2-phosphoglycerate-binding residues include Lys-341, Arg-370, Ser-371, and Lys-392. Lys-341 serves as the catalytic Proton acceptor.

It belongs to the enolase family. In terms of assembly, component of the RNA degradosome, a multiprotein complex involved in RNA processing and mRNA degradation. It depends on Mg(2+) as a cofactor.

Its subcellular location is the cytoplasm. The protein localises to the secreted. It localises to the cell surface. The catalysed reaction is (2R)-2-phosphoglycerate = phosphoenolpyruvate + H2O. It functions in the pathway carbohydrate degradation; glycolysis; pyruvate from D-glyceraldehyde 3-phosphate: step 4/5. Its function is as follows. Catalyzes the reversible conversion of 2-phosphoglycerate (2-PG) into phosphoenolpyruvate (PEP). It is essential for the degradation of carbohydrates via glycolysis. This is Enolase from Saccharophagus degradans (strain 2-40 / ATCC 43961 / DSM 17024).